The following is a 140-amino-acid chain: MAHSLVCPETVSRVSSVLNRNTRQFGKKHLFDQDEETCWNSDQGPSQWVTLEFPQCICVSQLQIQFQGGFSSRQGRLEGSLGSEALSKIVDFYPEDNNSLQTFPVPPAEVDRLKVTFEDTTDFFGRVVIYHLRVLGKKKE.

It belongs to the NR2C2AP family. In terms of assembly, interacts with NR2C2/TR4.

It localises to the nucleus. May act as a repressor of NR2C2-mediated transactivation by suppressing the binding between NR2C2/TR4 and the TR4-response element in target genes. This chain is Nuclear receptor 2C2-associated protein (NR2C2AP), found in Bos taurus (Bovine).